The chain runs to 662 residues: Pollen receptor-like kinase 1 (662 aa).

The signal sequence occupies residues 1-31; it reads MPPMQARTLSVYNVMVPLVCLLLFFSTPTHG. At 32 to 256 the chain is on the extracellular side; the sequence is LSDSEAILKF…ARPKSSSRGP (225 aa). LRR repeat units follow at residues 79–98, 99–121, 122–144, 147–169, 171–191, and 192–214; these read QMENLELSGSIDIEALSGLT, SLRTLSFMNNKFEGPFPDFKKLA, ALKSLYLSNNQFGGDIPGDAFEG, WLKKVHLAQNKFTGQIPSSVAKL, KLLELRLDGNQFTGEIPEFEH, and QLHLLNLSNNALTGPIPESLSMT. N197 carries N-linked (GlcNAc...) asparagine glycosylation. The interval 233-253 is disordered; that stretch reads ECDSPYIEHPPQSEARPKSSS. The chain crosses the membrane as a helical span at residues 257-277; sequence LVITAIVAALTILIILGVIFL. Over 278–662 the chain is Cytoplasmic; it reads LNRSYKNKKP…GESCESISFA (385 aa). Positions 288 to 330 are disordered; that stretch reads RLAVETGPSSLQKKTGIREADQSRRDRKKADHRKGSGTTKRMG. Residues 357–639 form the Protein kinase domain; that stretch reads KASAEILGSG…EREGDDDDFY (283 aa). S359 is modified (phosphoserine). ATP contacts are provided by residues 363-371 and K385; that span reads LGSGCFGAS. S437 bears the Phosphoserine mark. At T457 the chain carries Phosphothreonine. A Phosphotyrosine modification is found at Y527. Positions 636-662 are disordered; that stretch reads DDFYSTYVSETDGRSSKGESCESISFA. The span at 646–655 shows a compositional bias: basic and acidic residues; that stretch reads TDGRSSKGES.

This sequence belongs to the protein kinase superfamily. Ser/Thr protein kinase family. In terms of assembly, interacts in vitro with ROPGEF1 (via PRONE domain). In terms of tissue distribution, expressed in pollen and/or in flowers, but not in leaves.

It localises to the cell membrane. It carries out the reaction L-seryl-[protein] + ATP = O-phospho-L-seryl-[protein] + ADP + H(+). The catalysed reaction is L-threonyl-[protein] + ATP = O-phospho-L-threonyl-[protein] + ADP + H(+). Functionally, receptor-like kinase involved in the control of pollen germination and pollen tube polar growth. This chain is Pollen receptor-like kinase 1, found in Arabidopsis thaliana (Mouse-ear cress).